The sequence spans 209 residues: Holliday junction branch migration complex subunit RuvA (209 aa).

Residues 1–64 are domain I; the sequence is MIGKLKGLVD…EDSIKLYGFA (64 aa). The interval 65-143 is domain II; sequence SETEREWFRL…ALGASLHTLA (79 aa). A flexible linker region spans residues 144-154; that stretch reads GAGSEGAGVEA. The domain III stretch occupies residues 155-209; the sequence is PASGAVSDAISVLVNLGFGRSQAAVAVAASSKALGSGAGAGDLAKRALQELAQSG.

Belongs to the RuvA family. In terms of assembly, homotetramer. Forms an RuvA(8)-RuvB(12)-Holliday junction (HJ) complex. HJ DNA is sandwiched between 2 RuvA tetramers; dsDNA enters through RuvA and exits via RuvB. An RuvB hexamer assembles on each DNA strand where it exits the tetramer. Each RuvB hexamer is contacted by two RuvA subunits (via domain III) on 2 adjacent RuvB subunits; this complex drives branch migration. In the full resolvosome a probable DNA-RuvA(4)-RuvB(12)-RuvC(2) complex forms which resolves the HJ.

It localises to the cytoplasm. The RuvA-RuvB-RuvC complex processes Holliday junction (HJ) DNA during genetic recombination and DNA repair, while the RuvA-RuvB complex plays an important role in the rescue of blocked DNA replication forks via replication fork reversal (RFR). RuvA specifically binds to HJ cruciform DNA, conferring on it an open structure. The RuvB hexamer acts as an ATP-dependent pump, pulling dsDNA into and through the RuvAB complex. HJ branch migration allows RuvC to scan DNA until it finds its consensus sequence, where it cleaves and resolves the cruciform DNA. The chain is Holliday junction branch migration complex subunit RuvA from Methylocella silvestris (strain DSM 15510 / CIP 108128 / LMG 27833 / NCIMB 13906 / BL2).